A 197-amino-acid polypeptide reads, in one-letter code: Protein jagunal (197 aa).

Residues 1-39 (MATRGGPMVAGTDGNDFEFRQRVAGTYQISLLNKSRLKY) are Cytoplasmic-facing. A helical transmembrane segment spans residues 40–60 (CIFFHALLFFVMLAKLTSDIL). Residues 61–78 (DRLDIFVLEIEELEVPSP) are Lumenal-facing. A helical transmembrane segment spans residues 79–99 (LWWEYVWAGSLLTSFLGLSAA). The Cytoplasmic segment spans residues 100–109 (RGNKVREMQK). The chain crosses the membrane as a helical span at residues 110 to 130 (YMIAILVFAILPLLYCFAYYF). Over 131-159 (SDVWEFATMDKSVELDETDIFIWRGYPYG) the chain is Lumenal. A helical transmembrane segment spans residues 160–180 (VFWYAFCFVGFQVHGFTLYFA). Residues 181-197 (YNLVKVWKARTATRKFQ) lie on the Cytoplasmic side of the membrane.

The protein belongs to the jagunal family.

The protein localises to the endoplasmic reticulum membrane. Its function is as follows. Required for endoplasmic reticulum organization and proper vesicular traffic during vitellogenesis. Required for oocyte and bristle growth. In Drosophila pseudoobscura pseudoobscura (Fruit fly), this protein is Protein jagunal.